A 465-amino-acid chain; its full sequence is UDP-N-acetylmuramate--L-alanine ligase (465 aa).

112-118 (GTHGKTT) serves as a coordination point for ATP.

Belongs to the MurCDEF family.

It is found in the cytoplasm. It carries out the reaction UDP-N-acetyl-alpha-D-muramate + L-alanine + ATP = UDP-N-acetyl-alpha-D-muramoyl-L-alanine + ADP + phosphate + H(+). The protein operates within cell wall biogenesis; peptidoglycan biosynthesis. In terms of biological role, cell wall formation. The protein is UDP-N-acetylmuramate--L-alanine ligase of Burkholderia multivorans (strain ATCC 17616 / 249).